A 113-amino-acid chain; its full sequence is UPF0342 protein SpyM3_0545 (113 aa).

Belongs to the UPF0342 family.

The protein is UPF0342 protein SpyM3_0545 of Streptococcus pyogenes serotype M3 (strain ATCC BAA-595 / MGAS315).